The following is a 141-amino-acid chain: ATP synthase epsilon chain (141 aa).

The protein belongs to the ATPase epsilon chain family. In terms of assembly, F-type ATPases have 2 components, CF(1) - the catalytic core - and CF(0) - the membrane proton channel. CF(1) has five subunits: alpha(3), beta(3), gamma(1), delta(1), epsilon(1). CF(0) has three main subunits: a, b and c.

It is found in the cell inner membrane. Produces ATP from ADP in the presence of a proton gradient across the membrane. The polypeptide is ATP synthase epsilon chain (Desulfatibacillum aliphaticivorans).